The following is a 195-amino-acid chain: Imidazoleglycerol-phosphate dehydratase (195 aa).

This sequence belongs to the imidazoleglycerol-phosphate dehydratase family.

Its subcellular location is the cytoplasm. The catalysed reaction is D-erythro-1-(imidazol-4-yl)glycerol 3-phosphate = 3-(imidazol-4-yl)-2-oxopropyl phosphate + H2O. It participates in amino-acid biosynthesis; L-histidine biosynthesis; L-histidine from 5-phospho-alpha-D-ribose 1-diphosphate: step 6/9. The chain is Imidazoleglycerol-phosphate dehydratase from Burkholderia ambifaria (strain MC40-6).